The following is a 433-amino-acid chain: Minor capsid protein (433 aa).

Residues 353–419 (TGVTLSQKTM…ADITATTSNG (67 aa)) enclose the BIG2 domain.

Belongs to the T7virus minor capsid protein family. As to quaternary structure, interacts with the connector protein and the major capsid protein.

Its subcellular location is the virion. Functionally, assembles with the major capsid protein to form an icosahedral capsid with a T=7 symmetry, about 60 nm in diameter, and consisting of 415 capsid proteins. The major and minor capsid proteins are incorporated into the capsid in about a 90/10 ratio respectively. Once the capsid is formed, encapsidates one single copy of the viral genome. The sequence is that of Minor capsid protein (10) from Escherichia coli (Bacteriophage T3).